The primary structure comprises 419 residues: UDP-N-acetylglucosamine 1-carboxyvinyltransferase (419 aa).

Phosphoenolpyruvate is bound at residue 22–23 (KN). R91 lines the UDP-N-acetyl-alpha-D-glucosamine pocket. The Proton donor role is filled by C115. C115 is modified (2-(S-cysteinyl)pyruvic acid O-phosphothioketal). Residues 120-124 (RPVDL), 160-163 (KVSV), D305, and V327 contribute to the UDP-N-acetyl-alpha-D-glucosamine site.

The protein belongs to the EPSP synthase family. MurA subfamily.

The protein resides in the cytoplasm. It carries out the reaction phosphoenolpyruvate + UDP-N-acetyl-alpha-D-glucosamine = UDP-N-acetyl-3-O-(1-carboxyvinyl)-alpha-D-glucosamine + phosphate. Its pathway is cell wall biogenesis; peptidoglycan biosynthesis. In terms of biological role, cell wall formation. Adds enolpyruvyl to UDP-N-acetylglucosamine. The polypeptide is UDP-N-acetylglucosamine 1-carboxyvinyltransferase (Salmonella arizonae (strain ATCC BAA-731 / CDC346-86 / RSK2980)).